Consider the following 131-residue polypeptide: Small ribosomal subunit protein uS8 (131 aa).

This sequence belongs to the universal ribosomal protein uS8 family. As to quaternary structure, part of the 30S ribosomal subunit. Contacts proteins S5 and S12.

Its function is as follows. One of the primary rRNA binding proteins, it binds directly to 16S rRNA central domain where it helps coordinate assembly of the platform of the 30S subunit. This Desulforudis audaxviator (strain MP104C) protein is Small ribosomal subunit protein uS8.